Consider the following 229-residue polypeptide: Small ribosomal subunit protein uS3 (229 aa).

One can recognise a KH type-2 domain in the interval 39-107; sequence VRKFLEKKLK…PAQINIAEIR (69 aa).

The protein belongs to the universal ribosomal protein uS3 family. As to quaternary structure, part of the 30S ribosomal subunit. Forms a tight complex with proteins S10 and S14.

Functionally, binds the lower part of the 30S subunit head. Binds mRNA in the 70S ribosome, positioning it for translation. The chain is Small ribosomal subunit protein uS3 from Shewanella loihica (strain ATCC BAA-1088 / PV-4).